A 498-amino-acid chain; its full sequence is Bifunctional protein GlmU (498 aa).

A pyrophosphorylase region spans residues 1–238; sequence MSDAAVVILA…PALVAGVNDR (238 aa). UDP-N-acetyl-alpha-D-glucosamine-binding positions include 9–12, Lys23, Gln80, and 85–86; these read LAAG and GT. Asp111 serves as a coordination point for Mg(2+). Gly148, Glu163, Asn178, and Asn236 together coordinate UDP-N-acetyl-alpha-D-glucosamine. Asn236 serves as a coordination point for Mg(2+). The interval 239–259 is linker; it reads VQLADLGAELNRRVVAAHQRA. Residues 260–498 form an N-acetyltransferase region; sequence GVTIVDPATT…TAKPAPATGE (239 aa). Positions 341 and 359 each coordinate UDP-N-acetyl-alpha-D-glucosamine. His371 acts as the Proton acceptor in catalysis. 2 residues coordinate UDP-N-acetyl-alpha-D-glucosamine: Tyr374 and Asn385. Acetyl-CoA-binding positions include Ala388, 394 to 395, Ser413, and Ala431; that span reads NY. A disordered region spans residues 470–498; the sequence is AAEAAAADGDTAAADRAAATAKPAPATGE.

In the N-terminal section; belongs to the N-acetylglucosamine-1-phosphate uridyltransferase family. This sequence in the C-terminal section; belongs to the transferase hexapeptide repeat family. As to quaternary structure, homotrimer. Mg(2+) serves as cofactor.

Its subcellular location is the cytoplasm. It carries out the reaction alpha-D-glucosamine 1-phosphate + acetyl-CoA = N-acetyl-alpha-D-glucosamine 1-phosphate + CoA + H(+). It catalyses the reaction N-acetyl-alpha-D-glucosamine 1-phosphate + UTP + H(+) = UDP-N-acetyl-alpha-D-glucosamine + diphosphate. It participates in nucleotide-sugar biosynthesis; UDP-N-acetyl-alpha-D-glucosamine biosynthesis; N-acetyl-alpha-D-glucosamine 1-phosphate from alpha-D-glucosamine 6-phosphate (route II): step 2/2. The protein operates within nucleotide-sugar biosynthesis; UDP-N-acetyl-alpha-D-glucosamine biosynthesis; UDP-N-acetyl-alpha-D-glucosamine from N-acetyl-alpha-D-glucosamine 1-phosphate: step 1/1. It functions in the pathway bacterial outer membrane biogenesis; LPS lipid A biosynthesis. Functionally, catalyzes the last two sequential reactions in the de novo biosynthetic pathway for UDP-N-acetylglucosamine (UDP-GlcNAc). The C-terminal domain catalyzes the transfer of acetyl group from acetyl coenzyme A to glucosamine-1-phosphate (GlcN-1-P) to produce N-acetylglucosamine-1-phosphate (GlcNAc-1-P), which is converted into UDP-GlcNAc by the transfer of uridine 5-monophosphate (from uridine 5-triphosphate), a reaction catalyzed by the N-terminal domain. The sequence is that of Bifunctional protein GlmU from Mycolicibacterium gilvum (strain PYR-GCK) (Mycobacterium gilvum (strain PYR-GCK)).